The sequence spans 118 residues: Late cornified envelope protein 1B (118 aa).

The tract at residues 87 to 118 (CHRPQSSGCCSQPSGGSSCCGGGSGQHSGGCC) is disordered. The segment covering 90–103 (PQSSGCCSQPSGGS) has biased composition (low complexity). The span at 104 to 118 (SCCGGGSGQHSGGCC) shows a compositional bias: gly residues.

This sequence belongs to the LCE family. In terms of assembly, interacts with CYSRT1; the interaction is direct. Skin-specific. Expression was readily detected in adult trunk skin, adult arm skin, fetal skin, penal skin, vulva, esophagus and tongue. Not expressed in the cervix, rectum, lung, colon, or placenta.

Functionally, precursors of the cornified envelope of the stratum corneum. The sequence is that of Late cornified envelope protein 1B (LCE1B) from Homo sapiens (Human).